Reading from the N-terminus, the 398-residue chain is Acetate kinase (398 aa).

N8 serves as a coordination point for Mg(2+). Residue K15 participates in ATP binding. R89 serves as a coordination point for substrate. Catalysis depends on D146, which acts as the Proton donor/acceptor. Residues H206–G210, D283–R285, and G331–N335 each bind ATP. E383 contacts Mg(2+).

It belongs to the acetokinase family. Homodimer. The cofactor is Mg(2+). Mn(2+) is required as a cofactor.

It is found in the cytoplasm. The catalysed reaction is acetate + ATP = acetyl phosphate + ADP. It functions in the pathway metabolic intermediate biosynthesis; acetyl-CoA biosynthesis; acetyl-CoA from acetate: step 1/2. Functionally, catalyzes the formation of acetyl phosphate from acetate and ATP. Can also catalyze the reverse reaction. This Streptococcus pyogenes serotype M6 (strain ATCC BAA-946 / MGAS10394) protein is Acetate kinase.